The primary structure comprises 244 residues: L-xylulose reductase (244 aa).

Met1 is subject to N-acetylmethionine. 11-39 lines the NADP(+) pocket; sequence LVTGAGKGIGRSIVKALHAAGARVVAVSR. An Omega-N-methylarginine modification is found at Arg21. Ser46 bears the Phosphoserine mark. Ser136 serves as a coordination point for substrate. Tyr149 functions as the Proton acceptor in the catalytic mechanism. Lys153 is an active-site residue.

It belongs to the short-chain dehydrogenases/reductases (SDR) family. Homotetramer.

Its subcellular location is the membrane. It carries out the reaction xylitol + NADP(+) = L-xylulose + NADPH + H(+). Catalyzes the NADPH-dependent reduction of several pentoses, tetroses, trioses, alpha-dicarbonyl compounds and L-xylulose. Participates in the uronate cycle of glucose metabolism. May play a role in the water absorption and cellular osmoregulation in the proximal renal tubules by producing xylitol, an osmolyte, thereby preventing osmolytic stress from occurring in the renal tubules. The protein is L-xylulose reductase (DCXR) of Bos taurus (Bovine).